The primary structure comprises 118 residues: Small ribosomal subunit protein uS11 (118 aa).

The protein belongs to the universal ribosomal protein uS11 family. Part of the 30S ribosomal subunit. Interacts with proteins S7 and S18. Binds to IF-3.

Its function is as follows. Located on the platform of the 30S subunit, it bridges several disparate RNA helices of the 16S rRNA. Forms part of the Shine-Dalgarno cleft in the 70S ribosome. This chain is Small ribosomal subunit protein uS11, found in Carsonella ruddii (strain PV).